The primary structure comprises 198 residues: MPLGLLWLGLALLGALHAQAQDSTSDLIPAPPLSKVPLQQNFQDNQFQGKWYVVGLAGNAILREDKDPQKMYATIYELKEDKSYNVTSVLFRKKKCDYWIRTFVPGCQPGEFTLGNIKSYPGLTSYLVRVVSTNYNQHAMVFFKKVSQNREYFKITLYGRTKELTSELKENFIRFSKSLGLPENHIVFPVPIDQCIDG.

Residues 1–20 form the signal peptide; that stretch reads MPLGLLWLGLALLGALHAQA. Pyrrolidone carboxylic acid is present on Gln-21. 72–74 contributes to the a carboxymycobactin binding site; the sequence is YAT. N-linked (GlcNAc...) asparagine glycosylation occurs at Asn-85. A disulfide bridge connects residues Cys-96 and Cys-195. Position 126 (Tyr-126) interacts with enterobactin. Positions 145, 154, and 158 each coordinate a carboxymycobactin. Lys-154 is an enterobactin binding site.

The protein belongs to the calycin superfamily. Lipocalin family. As to quaternary structure, monomer. Homodimer; disulfide-linked. Heterodimer; disulfide-linked with MMP9. As to expression, detected in neutrophils (at protein level). Expressed in bone marrow and in tissues that are prone to exposure to microorganism. High expression is found in bone marrow as well as in uterus, prostate, salivary gland, stomach, appendix, colon, trachea and lung. Expressed in the medullary tubules of the kidney. Not found in the small intestine or peripheral blood leukocytes.

The protein resides in the secreted. Its subcellular location is the cytoplasmic granule lumen. It localises to the cytoplasmic vesicle lumen. Its function is as follows. Iron-trafficking protein involved in multiple processes such as apoptosis, innate immunity and renal development. Binds iron through association with 2,3-dihydroxybenzoic acid (2,3-DHBA), a siderophore that shares structural similarities with bacterial enterobactin, and delivers or removes iron from the cell, depending on the context. Iron-bound form (holo-24p3) is internalized following binding to the SLC22A17 (24p3R) receptor, leading to release of iron and subsequent increase of intracellular iron concentration. In contrast, association of the iron-free form (apo-24p3) with the SLC22A17 (24p3R) receptor is followed by association with an intracellular siderophore, iron chelation and iron transfer to the extracellular medium, thereby reducing intracellular iron concentration. Involved in apoptosis due to interleukin-3 (IL3) deprivation: iron-loaded form increases intracellular iron concentration without promoting apoptosis, while iron-free form decreases intracellular iron levels, inducing expression of the proapoptotic protein BCL2L11/BIM, resulting in apoptosis. Involved in innate immunity; limits bacterial proliferation by sequestering iron bound to microbial siderophores, such as enterobactin. Can also bind siderophores from M.tuberculosis. In Homo sapiens (Human), this protein is Neutrophil gelatinase-associated lipocalin (LCN2).